A 210-amino-acid polypeptide reads, in one-letter code: MKFLDHEKRRQLLNERHSCKMFDSHYEFSSTELEEIAEIARLSPSSYNTQPWHFVMVTNKDLKKQIAAHSYFNEEMIKSASALMVVCSLKPSELLPTSHYMQNLYPESYKVRVIPSFAQMLGVRFNHSMQKLESYILEQCYIAVGQICMGVSLMGLDSCIIGGFDPLKVGEILEERINKPKIVCLIALGKRVAEASKKSRKSKVDAITWL.

Gly-150–Gly-155 lines the NADP(+) pocket.

This sequence belongs to the nitroreductase family.

Reduction of a variety of nitroaromatic compounds using NADPH as source of reducing equivalents; two electrons are transferred. The polypeptide is Oxygen-insensitive NADPH nitroreductase (rdxA) (Helicobacter pylori (strain J99 / ATCC 700824) (Campylobacter pylori J99)).